The sequence spans 90 residues: Small ribosomal subunit protein uS15c (90 aa).

The protein belongs to the universal ribosomal protein uS15 family. Part of the 30S ribosomal subunit.

The protein resides in the plastid. It is found in the chloroplast. The protein is Small ribosomal subunit protein uS15c (rps15-A) of Hordeum vulgare (Barley).